Here is a 185-residue protein sequence, read N- to C-terminus: Photosystem I assembly protein Ycf4 (185 aa).

A run of 2 helical transmembrane segments spans residues 21–43 (NFFWACILFLGSLGFLSVGISSY) and 68–90 (FYGIAGLFISSYLCCTILWNVGS).

Belongs to the Ycf4 family.

The protein localises to the plastid. The protein resides in the chloroplast thylakoid membrane. Seems to be required for the assembly of the photosystem I complex. This chain is Photosystem I assembly protein Ycf4, found in Aegilops tauschii (Tausch's goatgrass).